A 727-amino-acid chain; its full sequence is Capsid protein VP1 (727 aa).

The segment covering 1-10 (MAPPAKRARR) has biased composition (basic residues). 2 disordered regions span residues 1–38 (MAPP…SDAA) and 95–184 (VLTD…VGIS). Positions 4–13 (PAKRARRGLV) match the Nuclear localization signal motif. The tract at residues 19–64 (YLGPGNSLDQGEPTNPSDAAAKEHDEAYAAYLRSGKNPYLYFSPAD) is phospholipase A2-like. The span at 25-35 (SLDQGEPTNPS) shows a compositional bias: polar residues. Residues 166–183 (SGNGSGGGGGGGSGGVGI) are compositionally biased toward gly residues. Asparagine 323 contributes to the Mg(2+) binding site. Positions 507–536 (AQTDENQAADGDPRYAFGRQHGQKTTTTGE) are disordered. A disulfide bridge links cysteine 633 with cysteine 637.

It belongs to the parvoviridae capsid protein family. As to quaternary structure, interacts with host TFRC.

The protein localises to the virion. The protein resides in the host nucleus. Functionally, capsid protein self-assembles to form an icosahedral capsid with a T=1 symmetry, about 22 nm in diameter, and consisting of 60 copies of two size variants of the capsid proteins, VP1 and VP2, which differ by the presence of an N-terminal extension in the minor protein VP1. The capsid encapsulates the genomic ssDNA. Capsid proteins are responsible for the attachment to host cell receptor TFRC. This attachment induces virion internalization predominantly through clathrin-dependent endocytosis. Binding to the host receptors also induces capsid rearrangements leading to surface exposure of VP1 N-terminus. The chain is Capsid protein VP1 from Feline panleukopenia virus (FPV).